A 100-amino-acid polypeptide reads, in one-letter code: uncharacterized protein (100 aa).

The protein localises to the secreted. This is an uncharacterized protein from Mycobacterium leprae (strain TN).